Reading from the N-terminus, the 633-residue chain is Heterogeneous nuclear ribonucleoprotein R (633 aa).

The interval 1–24 (MANQVNGNAVQLKEEEEPMDTSSV) is disordered. Ala-2 is subject to N-acetylalanine. Glycyl lysine isopeptide (Lys-Gly) (interchain with G-Cter in SUMO2) cross-links involve residues Lys-13 and Lys-171. RRM domains are found at residues 165 to 244 (TEVF…ISVA), 246 to 328 (NRLF…WADP), and 341 to 411 (KVLF…LAKP). Lys-359 is covalently cross-linked (Glycyl lysine isopeptide (Lys-Gly) (interchain with G-Cter in SUMO2)). At Lys-366 the chain carries N6-acetyllysine. A Nuclear localization signal motif is present at residues 412–418 (PDKKRKE). The segment at 412 to 456 (PDKKRKERQAARQASRSTAYEDYYYHPPPRMPPPIRGRGRGGGRG) is disordered. Positions 437-446 (HPPPRMPPPI) are enriched in pro residues. The interval 447 to 567 (RGRGRGGGRG…SRGSRGNRGG (121 aa)) is RNA-binding RGG-box. The 1; approximate repeat unit spans residues 462–471 (PDYYGYEDYY). Positions 462–497 (PDYYGYEDYYDDYYGYDYHDYRGGYEDPYYGYDDGY) are 3 X 11 AA approximate repeats of D-D-Y-Y-G-Y-D-Y-H-D-Y. The stretch at 472–482 (DDYYGYDYHDY) is repeat 2. A 3; approximate repeat occupies 488–497 (DPYYGYDDGY). Positions 501-510 (GRGGGRGGRG) are enriched in gly residues. A disordered region spans residues 501 to 633 (GRGGGRGGRG…YQDTYGQQWK (133 aa)). A compositionally biased stretch (pro residues) spans 511–524 (APPPPRGRGAPPPR). The segment covering 525-541 (GRAGYSQRGAPLGPPRG) has biased composition (low complexity). Gly residues predominate over residues 558 to 570 (SRGSRGNRGGNVG). The segment covering 588–604 (TNNQQNWGSQPIAQQPL) has biased composition (polar residues). Residues 605 to 621 (QQGGDYSGNYGYNNDNQ) show a composition bias toward low complexity. The segment covering 622–633 (EFYQDTYGQQWK) has biased composition (polar residues).

In terms of assembly, identified in the spliceosome C complex. Identified in a IGF2BP1-dependent mRNP granule complex containing untranslated mRNAs. Interacts with GTPBP1.

It localises to the nucleus. The protein resides in the microsome. Its subcellular location is the nucleoplasm. The protein localises to the cytoplasm. Functionally, component of ribonucleosomes, which are complexes of at least 20 other different heterogeneous nuclear ribonucleoproteins (hnRNP). hnRNP play an important role in processing of precursor mRNA in the nucleus. This Homo sapiens (Human) protein is Heterogeneous nuclear ribonucleoprotein R (HNRNPR).